The chain runs to 256 residues: Undecaprenyl-diphosphatase (256 aa).

7 helical membrane-spanning segments follow: residues 1–21, 41–61, 69–89, 96–116, 172–192, 207–227, and 233–253; these read MDIFHAIILGIVEGLTEFLPV, FHKTFEISIQLGSILAVLALF, VDIWLKLAVAFIPTGALGFLL, LFAPSTVAYALILGGIVFLVL, VAAEFSFLLALPTMFIATGYD, ALGVGFVVAFIFAMIAVKGFL, and FNFVPFGIYRIILGIIFLFYL.

It belongs to the UppP family.

It localises to the cell inner membrane. It catalyses the reaction di-trans,octa-cis-undecaprenyl diphosphate + H2O = di-trans,octa-cis-undecaprenyl phosphate + phosphate + H(+). Its function is as follows. Catalyzes the dephosphorylation of undecaprenyl diphosphate (UPP). Confers resistance to bacitracin. This Wolinella succinogenes (strain ATCC 29543 / DSM 1740 / CCUG 13145 / JCM 31913 / LMG 7466 / NCTC 11488 / FDC 602W) (Vibrio succinogenes) protein is Undecaprenyl-diphosphatase.